The following is a 55-amino-acid chain: Myrmicitoxin(1)-Pr6b (55 aa).

A signal peptide spans 1–22; sequence MKIIYAFLLIAVVAFMGSGIMA. A propeptide spanning residues 23–29 is cleaved from the precursor; it reads ESLAEAI.

The protein belongs to the formicidae venom clade 4 family. Expressed by the venom gland.

The protein localises to the secreted. Probable neurotoxin. The polypeptide is Myrmicitoxin(1)-Pr6b (Pogonomyrmex rugosus (Desert harvester ant)).